Reading from the N-terminus, the 102-residue chain is NADH-quinone oxidoreductase subunit K (102 aa).

3 helical membrane passes run 6–26 (LIGIMILAAGLFAVGVFGVLA), 30–50 (MLFQLVALEVALSGPALGFIA), and 63–83 (MFILVLTLAAAEVAVGLALFL).

It belongs to the complex I subunit 4L family. In terms of assembly, NDH-1 is composed of 14 different subunits. Subunits NuoA, H, J, K, L, M, N constitute the membrane sector of the complex.

The protein resides in the cell inner membrane. It carries out the reaction a quinone + NADH + 5 H(+)(in) = a quinol + NAD(+) + 4 H(+)(out). Its function is as follows. NDH-1 shuttles electrons from NADH, via FMN and iron-sulfur (Fe-S) centers, to quinones in the respiratory chain. The immediate electron acceptor for the enzyme in this species is believed to be ubiquinone. Couples the redox reaction to proton translocation (for every two electrons transferred, four hydrogen ions are translocated across the cytoplasmic membrane), and thus conserves the redox energy in a proton gradient. The chain is NADH-quinone oxidoreductase subunit K from Rhodopseudomonas palustris (strain TIE-1).